The primary structure comprises 482 residues: Aspartyl/glutamyl-tRNA(Asn/Gln) amidotransferase subunit B (482 aa).

Belongs to the GatB/GatE family. GatB subfamily. Heterotrimer of A, B and C subunits.

The enzyme catalyses L-glutamyl-tRNA(Gln) + L-glutamine + ATP + H2O = L-glutaminyl-tRNA(Gln) + L-glutamate + ADP + phosphate + H(+). It carries out the reaction L-aspartyl-tRNA(Asn) + L-glutamine + ATP + H2O = L-asparaginyl-tRNA(Asn) + L-glutamate + ADP + phosphate + 2 H(+). Functionally, allows the formation of correctly charged Asn-tRNA(Asn) or Gln-tRNA(Gln) through the transamidation of misacylated Asp-tRNA(Asn) or Glu-tRNA(Gln) in organisms which lack either or both of asparaginyl-tRNA or glutaminyl-tRNA synthetases. The reaction takes place in the presence of glutamine and ATP through an activated phospho-Asp-tRNA(Asn) or phospho-Glu-tRNA(Gln). In Thermotoga petrophila (strain ATCC BAA-488 / DSM 13995 / JCM 10881 / RKU-1), this protein is Aspartyl/glutamyl-tRNA(Asn/Gln) amidotransferase subunit B.